The sequence spans 915 residues: Protein O-mannosyl-transferase TMTC3 (915 aa).

Topologically, residues 1–8 (MANINLKE) are cytoplasmic. A helical transmembrane segment spans residues 9–29 (ITLIVGVVTACYWNSLFCGFV). Residues 30 to 93 (FDDVSAILDN…LSELKPMSYH (64 aa)) lie on the Extracellular side of the membrane. A helical membrane pass occupies residues 94-114 (LLNMIFHAVVSVIFLKVCKLF). Topologically, residues 115–120 (LDNKSS) are cytoplasmic. Transmembrane regions (helical) follow at residues 121 to 139 (VIAS…AVTG) and 140 to 158 (VVGR…AFLS). The Cytoplasmic segment spans residues 159 to 166 (YTRSKGPD). Residues 167–187 (NSIIWTPIALTVFLVAVATLC) traverse the membrane as a helical segment. Over 188-193 (KEQGIT) the chain is Extracellular. The chain crosses the membrane as a helical span at residues 194-214 (VVGICCVYEVFIAQGYTLPLL). At 215-231 (CTTAGQFLRGKGSIPFS) the chain is on the cytoplasmic side. A helical transmembrane segment spans residues 232 to 252 (MLQTLVKLIVLMFSTLLLVVI). At 253-317 (RVQVIQSQLP…TIPLIESLLD (65 aa)) the chain is on the extracellular side. The helical transmembrane segment at 318 to 338 (IRNLATFTFFCFLGMLGVFSI) threads the bilayer. Residues 339–353 (RYSGDSSKTVLMALC) are Cytoplasmic-facing. Residues 354-374 (LMALPFIPASNLFFPVGFVVA) form a helical membrane-spanning segment. Topologically, residues 375–376 (ER) are extracellular. A helical membrane pass occupies residues 377 to 397 (VLYVPSMGFCILVAHGWQKIS). Over 398-404 (TKSVFKK) the chain is Cytoplasmic. The helical transmembrane segment at 405–423 (LSWICLSMVILTHSLKTFH) threads the bilayer. Over 424–915 (RNWDWESEYT…EEIERILNGE (492 aa)) the chain is Extracellular. 9 TPR repeats span residues 446–479 (AKLW…QPDD), 480–513 (IGAH…MPQI), 529–562 (NVYI…RPDF), 563–596 (KQAY…DRNN), 597–631 (ADLW…NPKH), 669–702 (ANGY…QADF), 703–736 (RSAL…YPDH), 738–771 (KGLI…DPSN), and 772–805 (VQGK…APHE). An N-linked (GlcNAc...) asparagine glycan is attached at Asn-494. Residue Tyr-503 is modified to Phosphotyrosine. The N-linked (GlcNAc...) asparagine glycan is linked to Asn-541. Residues 848–892 (KEIRGESRQTQIVKTSDNKSQSKSNKQLGKNGDEETPHKTTKDIK) are disordered. An N-linked (GlcNAc...) asparagine glycan is attached at Asn-865. The segment covering 865-874 (NKSQSKSNKQ) has biased composition (low complexity). Over residues 878-892 (NGDEETPHKTTKDIK) the composition is skewed to basic and acidic residues.

The protein belongs to the TMTC family.

The protein localises to the membrane. The protein resides in the endoplasmic reticulum. The catalysed reaction is a di-trans,poly-cis-dolichyl beta-D-mannosyl phosphate + L-seryl-[protein] = 3-O-(alpha-D-mannosyl)-L-seryl-[protein] + a di-trans,poly-cis-dolichyl phosphate + H(+). The enzyme catalyses a di-trans,poly-cis-dolichyl beta-D-mannosyl phosphate + L-threonyl-[protein] = 3-O-(alpha-D-mannosyl)-L-threonyl-[protein] + a di-trans,poly-cis-dolichyl phosphate + H(+). It participates in protein modification; protein glycosylation. Its function is as follows. Transfers mannosyl residues to the hydroxyl group of serine or threonine residues. The 4 members of the TMTC family are O-mannosyl-transferases dedicated primarily to the cadherin superfamily, each member seems to have a distinct role in decorating the cadherin domains with O-linked mannose glycans at specific regions. Also acts as O-mannosyl-transferase on other proteins such as PDIA3. Involved in the positive regulation of proteasomal protein degradation in the endoplasmic reticulum (ER), and the control of ER stress response. This is Protein O-mannosyl-transferase TMTC3 from Homo sapiens (Human).